The sequence spans 440 residues: Protein arginine N-methyltransferase 2 (440 aa).

The segment at leucine 147–lysine 194 is disordered. Acidic residues predominate over residues glutamate 152–alanine 168. The span at glutamate 182 to lysine 194 shows a compositional bias: basic and acidic residues. Residues lysine 192 to leucine 440 enclose the RMT2 domain. Residues tyrosine 201, methionine 230, phenylalanine 252–valine 257, glutamate 273–histidine 275, tryptophan 310–glutamine 311, and aspartate 330 contribute to the S-adenosyl-L-methionine site.

It belongs to the class I-like SAM-binding methyltransferase superfamily. RMT2 methyltransferase family. As to quaternary structure, monomer.

The protein localises to the cytoplasm. It is found in the nucleus. S-adenosyl-L-methionine-dependent protein-arginine N-methyltransferase that methylates the delta-nitrogen atom of arginine residues to form N5-methylarginine (type IV) in target proteins. Monomethylates ribosomal protein L12. The sequence is that of Protein arginine N-methyltransferase 2 from Gibberella zeae (strain ATCC MYA-4620 / CBS 123657 / FGSC 9075 / NRRL 31084 / PH-1) (Wheat head blight fungus).